A 495-amino-acid polypeptide reads, in one-letter code: Ribose import ATP-binding protein RbsA (495 aa).

ABC transporter domains follow at residues 7–242 (LEMR…VGRP) and 250–491 (ERDI…TGVN). 39-46 (GENGAGKS) contributes to the ATP binding site.

The protein belongs to the ABC transporter superfamily. Ribose importer (TC 3.A.1.2.1) family. The complex is composed of an ATP-binding protein (RbsA), two transmembrane proteins (RbsC) and a solute-binding protein (RbsB).

The protein localises to the cell inner membrane. The enzyme catalyses D-ribose(out) + ATP + H2O = D-ribose(in) + ADP + phosphate + H(+). In terms of biological role, part of the ABC transporter complex RbsABC involved in ribose import. Responsible for energy coupling to the transport system. The chain is Ribose import ATP-binding protein RbsA from Shigella dysenteriae serotype 1 (strain Sd197).